We begin with the raw amino-acid sequence, 188 residues long: Pyridoxal 5'-phosphate synthase subunit PdxT (188 aa).

46–48 provides a ligand contact to L-glutamine; it reads GES. Residue cysteine 78 is the Nucleophile of the active site. Residues arginine 105 and 133–134 contribute to the L-glutamine site; that span reads IR. Catalysis depends on charge relay system residues histidine 169 and glutamate 171.

It belongs to the glutaminase PdxT/SNO family. In terms of assembly, in the presence of PdxS, forms a dodecamer of heterodimers. Only shows activity in the heterodimer.

The enzyme catalyses aldehydo-D-ribose 5-phosphate + D-glyceraldehyde 3-phosphate + L-glutamine = pyridoxal 5'-phosphate + L-glutamate + phosphate + 3 H2O + H(+). It carries out the reaction L-glutamine + H2O = L-glutamate + NH4(+). It functions in the pathway cofactor biosynthesis; pyridoxal 5'-phosphate biosynthesis. Its function is as follows. Catalyzes the hydrolysis of glutamine to glutamate and ammonia as part of the biosynthesis of pyridoxal 5'-phosphate. The resulting ammonia molecule is channeled to the active site of PdxS. The polypeptide is Pyridoxal 5'-phosphate synthase subunit PdxT (Thermosipho africanus (strain TCF52B)).